A 434-amino-acid polypeptide reads, in one-letter code: Tryptophan synthase beta chain 2 (434 aa).

Residue Lys-110 is modified to N6-(pyridoxal phosphate)lysine.

This sequence belongs to the TrpB family. In terms of assembly, tetramer of two alpha and two beta chains. It depends on pyridoxal 5'-phosphate as a cofactor.

The enzyme catalyses (1S,2R)-1-C-(indol-3-yl)glycerol 3-phosphate + L-serine = D-glyceraldehyde 3-phosphate + L-tryptophan + H2O. It participates in amino-acid biosynthesis; L-tryptophan biosynthesis; L-tryptophan from chorismate: step 5/5. Functionally, the beta subunit is responsible for the synthesis of L-tryptophan from indole and L-serine. In Aquifex aeolicus (strain VF5), this protein is Tryptophan synthase beta chain 2 (trpB2).